A 158-amino-acid polypeptide reads, in one-letter code: GTP-dependent dephospho-CoA kinase (158 aa).

GTP is bound by residues D35, V36, D54, K56, E109, and D132.

Belongs to the GTP-dependent DPCK family.

It catalyses the reaction 3'-dephospho-CoA + GTP = GDP + CoA + H(+). It participates in cofactor biosynthesis; coenzyme A biosynthesis. Its function is as follows. Catalyzes the GTP-dependent phosphorylation of the 3'-hydroxyl group of dephosphocoenzyme A to form coenzyme A (CoA). The polypeptide is GTP-dependent dephospho-CoA kinase (Methanococcus maripaludis (strain DSM 14266 / JCM 13030 / NBRC 101832 / S2 / LL)).